A 447-amino-acid polypeptide reads, in one-letter code: Glucose-6-phosphate isomerase (447 aa).

The active-site Proton donor is Glu-288. Active-site residues include His-309 and Lys-423.

The protein belongs to the GPI family.

Its subcellular location is the cytoplasm. It catalyses the reaction alpha-D-glucose 6-phosphate = beta-D-fructose 6-phosphate. It participates in carbohydrate biosynthesis; gluconeogenesis. Its pathway is carbohydrate degradation; glycolysis; D-glyceraldehyde 3-phosphate and glycerone phosphate from D-glucose: step 2/4. Its function is as follows. Catalyzes the reversible isomerization of glucose-6-phosphate to fructose-6-phosphate. The sequence is that of Glucose-6-phosphate isomerase from Lactobacillus johnsonii (strain CNCM I-12250 / La1 / NCC 533).